Consider the following 1035-residue polypeptide: Ephrin type-A receptor 6 (1035 aa).

Positions 1–22 (MGGCEVREFLLQFGFFLPLLTA) are cleaved as a signal peptide. Topologically, residues 23–549 (WTGDCSHVSN…MAAEQGQILV (527 aa)) are extracellular. Positions 33–211 (QVVLLDTTTV…FYKKCPFTVR (179 aa)) constitute an Eph LBD domain. Fibronectin type-III domains lie at 330–440 (PPSA…TDHD) and 441–536 (APSL…TGDE). N-linked (GlcNAc...) asparagine glycosylation is found at asparagine 342, asparagine 396, and asparagine 409. Residues 550 to 570 (IATAAVGGFTLLVILTLFFLI) traverse the membrane as a helical segment. Residues 571–1035 (TGRCQWYIKA…MHIQEKGFHV (465 aa)) lie on the Cytoplasmic side of the membrane. Phosphotyrosine; by autocatalysis occurs at positions 605 and 611. Residues 630 to 943 (IRIERVIGAG…RNPSALHTLV (314 aa)) form the Protein kinase domain. Residues 636-644 (IGAGEFGEV) and lysine 662 each bind ATP. Aspartate 797 serves as the catalytic Proton acceptor. Residues tyrosine 830 and tyrosine 977 each carry the phosphotyrosine; by autocatalysis modification. In terms of domain architecture, SAM spans 960–1024 (PLFVTVGDWL…VSSIQTLRLH (65 aa)). The short motif at 1033–1035 (FHV) is the PDZ-binding element.

This sequence belongs to the protein kinase superfamily. Tyr protein kinase family. Ephrin receptor subfamily. In terms of assembly, heterotetramer upon binding of the ligand. The heterotetramer is composed of an ephrin dimer and a receptor dimer. Oligomerization is probably required to induce biological responses. Interacts (via SAM domain) with ANKS1A (via SAM domain).

Its subcellular location is the membrane. It carries out the reaction L-tyrosyl-[protein] + ATP = O-phospho-L-tyrosyl-[protein] + ADP + H(+). Receptor tyrosine kinase which binds promiscuously GPI-anchored ephrin-A family ligands residing on adjacent cells, leading to contact-dependent bidirectional signaling into neighboring cells. The signaling pathway downstream of the receptor is referred to as forward signaling while the signaling pathway downstream of the ephrin ligand is referred to as reverse signaling. This Mus musculus (Mouse) protein is Ephrin type-A receptor 6 (Epha6).